A 956-amino-acid chain; its full sequence is Translation initiation factor IF-2 (956 aa).

Positions 50–351 (FPADSGGAAN…APSIGGVQVP (302 aa)) are disordered. Pro residues predominate over residues 64 to 95 (APKPARAPKPAPKAAPAPPVEEAPAEPAPPAA). Composition is skewed to low complexity over residues 96 to 107 (PEVVAAPEAPVA) and 121 to 136 (PEAP…ARPA). Residues 146–155 (AAEKPADTRT) are compositionally biased toward basic and acidic residues. Gly residues-rich tracts occupy residues 171 to 192 (RPGG…GGPR) and 206 to 234 (RPGG…GQGG). Over residues 235–254 (SRPSPGMMPGRSAVGRPGAP) the composition is skewed to low complexity. Over residues 255 to 320 (ARGGSGGPGG…GTQGAFGRAG (66 aa)) the composition is skewed to gly residues. Positions 324 to 333 (VRARKSRRAK) are enriched in basic residues. One can recognise a tr-type G domain in the interval 448-619 (ARPPVVTVMG…AVLLTADAAL (172 aa)). The tract at residues 457-464 (GHVDHGKT) is G1. Residue 457–464 (GHVDHGKT) participates in GTP binding. Residues 482-486 (GITQH) are G2. The interval 507 to 510 (DTPG) is G3. Residues 507–511 (DTPGH) and 561–564 (NKVD) each bind GTP. The interval 561 to 564 (NKVD) is G4. Positions 597-599 (SAK) are G5.

Belongs to the TRAFAC class translation factor GTPase superfamily. Classic translation factor GTPase family. IF-2 subfamily.

It localises to the cytoplasm. In terms of biological role, one of the essential components for the initiation of protein synthesis. Protects formylmethionyl-tRNA from spontaneous hydrolysis and promotes its binding to the 30S ribosomal subunits. Also involved in the hydrolysis of GTP during the formation of the 70S ribosomal complex. The polypeptide is Translation initiation factor IF-2 (Beutenbergia cavernae (strain ATCC BAA-8 / DSM 12333 / CCUG 43141 / JCM 11478 / NBRC 16432 / NCIMB 13614 / HKI 0122)).